A 248-amino-acid polypeptide reads, in one-letter code: PF03932 family protein CutC (248 aa).

This sequence belongs to the CutC family.

Its subcellular location is the cytoplasm. The sequence is that of PF03932 family protein CutC from Citrobacter koseri (strain ATCC BAA-895 / CDC 4225-83 / SGSC4696).